The primary structure comprises 776 residues: Mitochondrial intermediate peptidase (776 aa).

A mitochondrion-targeting transit peptide spans 1 to 28 (MFVRFYKRLDRQYIQSQRRWILSSNKCL). A disordered region spans residues 48–71 (DHWEESQAQNTSSEQDNKGKNSSY). Residues 53–71 (SQAQNTSSEQDNKGKNSSY) are compositionally biased toward polar residues. A Zn(2+)-binding site is contributed by His567. The active site involves Glu568. Residues His571 and His574 each coordinate Zn(2+).

The protein belongs to the peptidase M3 family. Zn(2+) is required as a cofactor.

The protein resides in the mitochondrion matrix. The enzyme catalyses Release of an N-terminal octapeptide as second stage of processing of some proteins imported into the mitochondrion.. Functionally, cleaves proteins, imported into the mitochondrion, to their mature size. While most mitochondrial precursor proteins are processed to the mature form in one step by mitochondrial processing peptidase (MPP), the sequential cleavage by MIP of an octapeptide after initial processing by MPP is a required step for a subgroup of nuclear-encoded precursor proteins destined for the matrix or the inner membrane. The protein is Mitochondrial intermediate peptidase (OCT1) of Eremothecium gossypii (strain ATCC 10895 / CBS 109.51 / FGSC 9923 / NRRL Y-1056) (Yeast).